Here is a 422-residue protein sequence, read N- to C-terminus: UDP-N-acetylglucosamine 1-carboxyvinyltransferase (422 aa).

Residue 22–23 (KN) coordinates phosphoenolpyruvate. Residue Arg92 coordinates UDP-N-acetyl-alpha-D-glucosamine. Cys116 (proton donor) is an active-site residue. The residue at position 116 (Cys116) is a 2-(S-cysteinyl)pyruvic acid O-phosphothioketal. UDP-N-acetyl-alpha-D-glucosamine contacts are provided by Asp306 and Ile328.

This sequence belongs to the EPSP synthase family. MurA subfamily.

Its subcellular location is the cytoplasm. The enzyme catalyses phosphoenolpyruvate + UDP-N-acetyl-alpha-D-glucosamine = UDP-N-acetyl-3-O-(1-carboxyvinyl)-alpha-D-glucosamine + phosphate. Its pathway is cell wall biogenesis; peptidoglycan biosynthesis. Its function is as follows. Cell wall formation. Adds enolpyruvyl to UDP-N-acetylglucosamine. The protein is UDP-N-acetylglucosamine 1-carboxyvinyltransferase of Elusimicrobium minutum (strain Pei191).